Here is a 65-residue protein sequence, read N- to C-terminus: Sec-independent protein translocase protein TatA (65 aa).

The chain crosses the membrane as a helical span at residues 1–21; the sequence is MFGLGGQELVLILLIILLLFG.

It belongs to the TatA/E family. In terms of assembly, forms a complex with TatC.

The protein resides in the cell inner membrane. Part of the twin-arginine translocation (Tat) system that transports large folded proteins containing a characteristic twin-arginine motif in their signal peptide across membranes. TatA could form the protein-conducting channel of the Tat system. This Chlorobium phaeobacteroides (strain DSM 266 / SMG 266 / 2430) protein is Sec-independent protein translocase protein TatA.